The following is an 88-amino-acid chain: UPF0298 protein BA_4142/GBAA_4142/BAS3844 (88 aa).

Belongs to the UPF0298 family.

It localises to the cytoplasm. This Bacillus anthracis protein is UPF0298 protein BA_4142/GBAA_4142/BAS3844.